The primary structure comprises 295 residues: WHI2-like protein P4H10.16c (295 aa).

This sequence belongs to the WHI2 family.

Its subcellular location is the cytoplasm. It is found in the nucleus. In Schizosaccharomyces pombe (strain 972 / ATCC 24843) (Fission yeast), this protein is WHI2-like protein P4H10.16c.